A 99-amino-acid chain; its full sequence is DNA-binding protein HU (99 aa).

The disordered stretch occupies residues 67–86 (REGRNPKTGAKMKIDAYNQP).

Belongs to the bacterial histone-like protein family. Homodimer.

Its function is as follows. Histone-like DNA-binding protein which is capable of wrapping DNA to stabilize it, and thus to prevent its denaturation under extreme environmental conditions. The chain is DNA-binding protein HU (hup) from Rickettsia felis (strain ATCC VR-1525 / URRWXCal2) (Rickettsia azadi).